The chain runs to 130 residues: MASITGSSVSFKCAPLQSSFNSKNYALKSSVTFWRRTPVMPRGLSVSCAAKPEMVTKVSDIVKSQLALAEDAKVTGETKFSEIGADSLDTVEIVMKLEEEFGVTVEEENAQTITTIQEAADMIEALQQNK.

Residues M1–C48 constitute a chloroplast transit peptide. A Carrier domain is found at P52 to Q127. S87 is subject to O-(pantetheine 4'-phosphoryl)serine.

The protein belongs to the acyl carrier protein (ACP) family. 4'-phosphopantetheine is transferred from CoA to a specific serine of apo-ACP by acpS. This modification is essential for activity because fatty acids are bound in thioester linkage to the sulfhydryl of the prosthetic group. Roots, leaves and seeds.

It is found in the plastid. It localises to the chloroplast. The protein operates within lipid metabolism; fatty acid biosynthesis. In terms of biological role, carrier of the growing fatty acid chain in fatty acid biosynthesis. The protein is Acyl carrier protein 2, chloroplastic (ACL1.2) of Spinacia oleracea (Spinach).